Here is a 218-residue protein sequence, read N- to C-terminus: Cytochrome b6 (218 aa).

Residues 35–55 (IFYCLGGITLVCFLIQFATGF) form a helical membrane-spanning segment. Residue Cys-38 participates in heme c binding. Heme b contacts are provided by His-89 and His-103. Transmembrane regions (helical) follow at residues 93-113 (ASMMVLMLILHVFRVYLTGGF), 119-139 (LTWVTGVVMAVITVAFGVTGY), and 189-209 (LHTFVLPWSLAVFMLMHFLMI). Heme b contacts are provided by His-190 and His-205.

The protein belongs to the cytochrome b family. PetB subfamily. The 4 large subunits of the cytochrome b6-f complex are cytochrome b6, subunit IV (17 kDa polypeptide, PetD), cytochrome f and the Rieske protein, while the 4 small subunits are PetG, PetL, PetM and PetN. The complex functions as a dimer. Heme b is required as a cofactor. Requires heme c as cofactor.

Its subcellular location is the cellular thylakoid membrane. Its function is as follows. Component of the cytochrome b6-f complex, which mediates electron transfer between photosystem II (PSII) and photosystem I (PSI), cyclic electron flow around PSI, and state transitions. This Prochlorococcus marinus subsp. pastoris (strain CCMP1986 / NIES-2087 / MED4) protein is Cytochrome b6.